A 1208-amino-acid polypeptide reads, in one-letter code: Neural cell adhesion molecule L1-like protein (1208 aa).

An N-terminal signal peptide occupies residues 1-24 (MEPLLLGRGLIVYLMFLLLKFSKA). Topologically, residues 25-1082 (IEIPSSVQQV…LYDDISTQGW (1058 aa)) are extracellular. 2 consecutive Ig-like C2-type domains span residues 35–124 (PTII…EEIE) and 128–223 (PSVP…MKLT). 2 disulfides stabilise this stretch: Cys57–Cys109 and Cys153–Cys204. Residues Lys231 and Asn299 are each glycosylated (N-linked (GlcNAc...) asparagine). 4 Ig-like C2-type domains span residues 235-328 (PKLL…VIVE), 331-417 (PRWT…ANID), 423-510 (PLIQ…ANLD), and 515-607 (TKLR…TQVT). Cystine bridges form between Cys262/Cys310, Cys352/Cys401, Cys445/Cys494, and Cys536/Cys591. N-linked (GlcNAc...) asparagine glycans are attached at residues Asn476 and Asn482. The short motif at 555–558 (DGEA) is the DGEA element. N-linked (GlcNAc...) asparagine glycosylation is found at Asn562 and Asn580. 4 Fibronectin type-III domains span residues 614–709 (PPEN…TPPA), 714–807 (NPQN…SGED), 809–914 (PDTA…TPEG), and 918–1015 (QPTF…LGEG). Positions 693 to 716 (GRSQPSQPSDHHETPPAAPDRNPQ) are disordered. Residues Asn767, Asn822, Asn945, and Asn1026 are each glycosylated (N-linked (GlcNAc...) asparagine). Residues 1083-1103 (FIGLMCAIALLTLLLLTVCFV) traverse the membrane as a helical segment. Residues 1104–1208 (KRNRGGKYSV…SSTATFPLRA (105 aa)) are Cytoplasmic-facing. The tract at residues 1131 to 1163 (ETFGEYSDSDEKPLKGSLRSLNRDMQPTESADS) is disordered. Phosphoserine is present on residues Ser1147, Ser1160, and Ser1180. A compositionally biased stretch (polar residues) spans 1149–1161 (RSLNRDMQPTESA). An FIG[AQ]Y motif is present at residues 1181–1185 (FIGAY). The disordered stretch occupies residues 1189-1208 (KEKGSVESNGSSTATFPLRA). Polar residues predominate over residues 1194 to 1208 (VESNGSSTATFPLRA).

It belongs to the immunoglobulin superfamily. L1/neurofascin/NgCAM family. As to quaternary structure, may interact with L1CAM. May interact with ITGB1/ITGA1 heterodimer and ITGB1/ITGA2 heterodimer as well as with ANK3. In terms of processing, cleavage by metalloprotease ADAM8 in the extracellular part generates 2 soluble forms (125 kDa and 165 kDa) in vitro and is inhibited by metalloprotease inhibitors. Cleaved by BACE1. Post-translationally, N-glycosylated. Contains N-linked oligosaccharides with a sulfated carbohydrate structure type HNK-1 (SO4-3-GlcUABeta1,3GalBeta1,4GlcNAc). O-glycosylated. In terms of tissue distribution, expressed in the fetal and adult brain as well as in Schwann cell culture. Also detected in adult peripheral tissues.

Its subcellular location is the cell membrane. The protein localises to the secreted. It localises to the extracellular space. The protein resides in the extracellular matrix. Functionally, extracellular matrix and cell adhesion protein that plays a role in nervous system development and in synaptic plasticity. Both soluble and membranous forms promote neurite outgrowth of cerebellar and hippocampal neurons and suppress neuronal cell death. Plays a role in neuronal positioning of pyramidal neurons and in regulation of both the number of interneurons and the efficacy of GABAergic synapses. May play a role in regulating cell migration in nerve regeneration and cortical development. Potentiates integrin-dependent cell migration towards extracellular matrix proteins. Recruits ANK3 to the plasma membrane. This Homo sapiens (Human) protein is Neural cell adhesion molecule L1-like protein (CHL1).